The following is a 347-amino-acid chain: ATP-dependent (S)-NAD(P)H-hydrate dehydratase (347 aa).

The YjeF C-terminal domain maps to 53 to 344 (TLQLVRNIIP…AEVGAAFSKL (292 aa)). The residue at position 85 (Tyr-85) is a Phosphotyrosine. Residues Gly-153 and 206-212 (NHVEFSR) each bind (6S)-NADPHX. N-linked (GlcNAc...) asparagine glycosylation occurs at Asn-240. Residues 246-250 (KGERD) and 265-274 (GSSRRCGGQG) contribute to the ATP site. Asp-275 contributes to the (6S)-NADPHX binding site. Asn-297 carries N-linked (GlcNAc...) asparagine glycosylation.

This sequence belongs to the NnrD/CARKD family. Requires Mg(2+) as cofactor.

It is found in the mitochondrion. The enzyme catalyses (6S)-NADHX + ATP = ADP + phosphate + NADH + H(+). The catalysed reaction is (6S)-NADPHX + ATP = ADP + phosphate + NADPH + H(+). Its function is as follows. Catalyzes the dehydration of the S-form of NAD(P)HX at the expense of ATP, which is converted to ADP. Together with NAD(P)HX epimerase, which catalyzes the epimerization of the S- and R-forms, the enzyme allows the repair of both epimers of NAD(P)HX, a damaged form of NAD(P)H that is a result of enzymatic or heat-dependent hydration. The chain is ATP-dependent (S)-NAD(P)H-hydrate dehydratase from Homo sapiens (Human).